We begin with the raw amino-acid sequence, 187 residues long: Adenylate kinase 1 (187 aa).

Residue 14–19 (GSGKGT) coordinates ATP. Positions 34–63 (STGDMLRQAIADGTELGNQAKGYMDKGELV) are NMP. Residues threonine 35, arginine 40, 61–63 (ELV), 89–92 (GFPR), and glutamine 96 each bind AMP. The tract at residues 130–136 (ARGRADD) is LID. Position 131 (arginine 131) interacts with ATP. The AMP site is built by arginine 133 and arginine 144. Residue glutamine 172 coordinates ATP.

Belongs to the adenylate kinase family. In terms of assembly, monomer.

Its subcellular location is the cytoplasm. It carries out the reaction AMP + ATP = 2 ADP. The protein operates within purine metabolism; AMP biosynthesis via salvage pathway; AMP from ADP: step 1/1. Its function is as follows. Catalyzes the reversible transfer of the terminal phosphate group between ATP and AMP. Plays an important role in cellular energy homeostasis and in adenine nucleotide metabolism. This chain is Adenylate kinase 1, found in Synechocystis sp. (strain ATCC 27184 / PCC 6803 / Kazusa).